The sequence spans 493 residues: Guanosine-5'-triphosphate,3'-diphosphate pyrophosphatase (493 aa).

It belongs to the GppA/Ppx family. GppA subfamily.

It catalyses the reaction guanosine 3'-diphosphate 5'-triphosphate + H2O = guanosine 3',5'-bis(diphosphate) + phosphate + H(+). Its pathway is purine metabolism; ppGpp biosynthesis; ppGpp from GTP: step 2/2. Its function is as follows. Catalyzes the conversion of pppGpp to ppGpp. Guanosine pentaphosphate (pppGpp) is a cytoplasmic signaling molecule which together with ppGpp controls the 'stringent response', an adaptive process that allows bacteria to respond to amino acid starvation, resulting in the coordinated regulation of numerous cellular activities. The sequence is that of Guanosine-5'-triphosphate,3'-diphosphate pyrophosphatase from Salmonella paratyphi A (strain ATCC 9150 / SARB42).